The primary structure comprises 249 residues: 5'-nucleotidase SurE (249 aa).

Positions 9, 10, 40, and 92 each coordinate a divalent metal cation.

It belongs to the SurE nucleotidase family. It depends on a divalent metal cation as a cofactor.

Its subcellular location is the cytoplasm. The enzyme catalyses a ribonucleoside 5'-phosphate + H2O = a ribonucleoside + phosphate. Functionally, nucleotidase that shows phosphatase activity on nucleoside 5'-monophosphates. The sequence is that of 5'-nucleotidase SurE from Shewanella loihica (strain ATCC BAA-1088 / PV-4).